Consider the following 556-residue polypeptide: Urocanate hydratase (556 aa).

NAD(+) is bound by residues 52-53, Q130, 176-178, E196, R201, 242-243, 263-267, 273-274, and Y322; these read GG, GMG, NA, QTSAH, and YL. C410 is a catalytic residue. G492 is an NAD(+) binding site.

It belongs to the urocanase family. NAD(+) serves as cofactor.

It localises to the cytoplasm. It carries out the reaction 4-imidazolone-5-propanoate = trans-urocanate + H2O. It participates in amino-acid degradation; L-histidine degradation into L-glutamate; N-formimidoyl-L-glutamate from L-histidine: step 2/3. In terms of biological role, catalyzes the conversion of urocanate to 4-imidazolone-5-propionate. The protein is Urocanate hydratase of Shewanella sp. (strain ANA-3).